Consider the following 256-residue polypeptide: Nuclear shuttle protein (256 aa).

Polar residues predominate over residues methionine 1–glycine 16. The disordered stretch occupies residues methionine 1–glutamine 46. The short motif at arginine 21 to valine 42 is the Bipartite nuclear localization signal element. A Nuclear localization signal motif is present at residues serine 81–leucine 96. Residues glutamate 150–aspartate 187 are interaction with Arabidopsis thaliana NSI protein. The Nuclear export signal motif lies at valine 177–glutamine 198.

The protein belongs to the begomovirus nuclear shuttle protein family. In terms of assembly, binds to single-stranded and double-stranded viral DNA. Interacts with the host nuclear shuttle interacting (NSI) protein. This interaction may allow NSP to recruit NSI monomers to the viral genome and thus regulate nuclear export of viral genome by NSP.

It localises to the host nucleus. The protein resides in the host cytoplasm. It is found in the host cell membrane. Functionally, binds to the genomic viral ssDNA, shuttles it into and out of the cell nucleus. Begomoviruses use 2 proteins to transport their DNA from cell to cell. The nuclear shuttle protein (NSP) shuttles it between nucleus and cytoplasm and the movement protein (MP) probably transports the DNA-NSP complex to the cell periphery and facilitates movement across the cell wall. This chain is Nuclear shuttle protein, found in Squash leaf curl virus (SLCV).